Consider the following 342-residue polypeptide: MNHSLKPWNTFGIDHNAQHIVCAEDEQQLLNAWQYATAEGQPVLILGEGSNVLFLEDYRGTVIINRIKGIEIHDEPDAWYLHVGAGENWHRLVKYTLQEGMPGLENLALIPGCVGSSPIQNIGAYGVELQRVCAYVDSVELATGKQVRLTAKECRFGYRDSIFKHEYQDRFAIVAVGLRLPKEWQPVLTYGDLTRLDPTTVTPQQVFNAVCHMRTTKLPDPKVNGNAGSFFKNPVVSAETAKALLSQFPTAPNYPQADGSVKLAAGWLIDQCQLKGMQIGGAAVHRQQALVLINEDNAKSEDVVQLAHHVRQKVGEKFNVWLEPEVRFIGASGEVSAVETIS.

An FAD-binding PCMH-type domain is found at 13 to 183; it reads IDHNAQHIVC…VAVGLRLPKE (171 aa). Arginine 159 is a catalytic residue. Tyrosine 190 provides a ligand contact to substrate. Residue serine 229 is the Proton donor of the active site. The active site involves glutamate 325.

Belongs to the MurB family. Monomer. The cofactor is FAD.

Its subcellular location is the cytoplasm. The enzyme catalyses UDP-N-acetyl-alpha-D-muramate + NADP(+) = UDP-N-acetyl-3-O-(1-carboxyvinyl)-alpha-D-glucosamine + NADPH + H(+). It participates in cell wall biogenesis; peptidoglycan biosynthesis. Cell wall formation. This Escherichia coli (strain K12) protein is UDP-N-acetylenolpyruvoylglucosamine reductase (murB).